The chain runs to 66 residues: Ribosome biogenesis protein Nop10 (66 aa).

The protein belongs to the NOP10 family.

Involved in ribosome biogenesis; more specifically in 18S rRNA pseudouridylation and in cleavage of pre-rRNA. This is Ribosome biogenesis protein Nop10 from Desulfurococcus amylolyticus (strain DSM 18924 / JCM 16383 / VKM B-2413 / 1221n) (Desulfurococcus kamchatkensis).